The following is a 244-amino-acid chain: Transcriptional activator protein anr (244 aa).

21 to 149 lines the a nucleoside 3',5'-cyclic phosphate pocket; it reads APLCLPLSLT…RLMSREIRDD (129 aa). The HTH crp-type domain occupies 159-232; that stretch reads KTADERIATF…GKEVHILDSI (74 aa). Residues 192 to 211 constitute a DNA-binding region (H-T-H motif); it reads RNEIGNYLGLAVETVSRVFT.

Functionally, transcriptional activator of anaerobic gene expression. This is Transcriptional activator protein anr (anr) from Pseudomonas aeruginosa (strain ATCC 15692 / DSM 22644 / CIP 104116 / JCM 14847 / LMG 12228 / 1C / PRS 101 / PAO1).